The primary structure comprises 252 residues: 5-oxoprolinase subunit A (252 aa).

This sequence belongs to the LamB/PxpA family. Forms a complex composed of PxpA, PxpB and PxpC.

It carries out the reaction 5-oxo-L-proline + ATP + 2 H2O = L-glutamate + ADP + phosphate + H(+). In terms of biological role, catalyzes the cleavage of 5-oxoproline to form L-glutamate coupled to the hydrolysis of ATP to ADP and inorganic phosphate. The polypeptide is 5-oxoprolinase subunit A (Bacillus cytotoxicus (strain DSM 22905 / CIP 110041 / 391-98 / NVH 391-98)).